A 483-amino-acid polypeptide reads, in one-letter code: Arginine/agmatine antiporter (483 aa).

The next 12 helical transmembrane spans lie at 11-31 (ILGT…GGIF), 41-61 (ASAG…FFIA), 85-105 (GFGP…QIFG), 124-144 (YFAG…IWIF), 157-177 (FVNI…ILIT), 208-228 (STML…VISG), 239-259 (ATIL…LLPF), 289-309 (VLMN…WTIL), 336-356 (PSFS…LVYF), 364-384 (MLEI…LFLV), 415-435 (LWLI…LLAL), and 458-478 (EILK…LFSA).

The protein belongs to the amino acid-polyamine-organocation (APC) superfamily. Basic amino acid/polyamine antiporter (APA) (TC 2.A.3.2) family.

Its subcellular location is the cell inner membrane. Its function is as follows. Catalyzes the exchange of L-arginine for agmatine. The arginine uptake by the bacterium in the macrophage may be a virulence factor against the host innate immune response. This is Arginine/agmatine antiporter (aaxC) from Chlamydia trachomatis serovar A (strain ATCC VR-571B / DSM 19440 / HAR-13).